Here is a 295-residue protein sequence, read N- to C-terminus: uncharacterized protein (295 aa).

The HTH lysR-type domain occupies 1 to 58 (MESGDLRVFQMVAREGTITKAALQLGYVQSNVTARIQQLEAELGTTLFLRHNRGMTLS). The segment at residues 18 to 37 (ITKAALQLGYVQSNVTARIQ) is a DNA-binding region (H-T-H motif).

The protein belongs to the LysR transcriptional regulatory family.

This is an uncharacterized protein from Bacillus subtilis (strain 168).